We begin with the raw amino-acid sequence, 349 residues long: Threonine-rich protein (349 aa).

Residues 1–19 form the signal peptide; sequence MKGLTLACIAATVVAASHA. N-linked (GlcNAc...) asparagine glycosylation is present at Asn257. The interval 300 to 326 is disordered; that stretch reads QPDVSPMSVRKRRQAESAEEDDDLVGD. Residues 316 to 326 are compositionally biased toward acidic residues; that stretch reads SAEEDDDLVGD. Residues 316–349 are a coiled coil; the sequence is SAEEDDDLVGDMEDLKELEQEIQEALEEVEKLDV.

As to expression, component of the acid-insoluble and acid-soluble organic matrix of calcified layers of the shell (at protein level).

It localises to the secreted. The polypeptide is Threonine-rich protein (Lottia gigantea (Giant owl limpet)).